The sequence spans 449 residues: Exodeoxyribonuclease 7 large subunit (449 aa).

The protein belongs to the XseA family. In terms of assembly, heterooligomer composed of large and small subunits.

It localises to the cytoplasm. It carries out the reaction Exonucleolytic cleavage in either 5'- to 3'- or 3'- to 5'-direction to yield nucleoside 5'-phosphates.. Functionally, bidirectionally degrades single-stranded DNA into large acid-insoluble oligonucleotides, which are then degraded further into small acid-soluble oligonucleotides. This chain is Exodeoxyribonuclease 7 large subunit, found in Salmonella heidelberg (strain SL476).